The primary structure comprises 186 residues: Ribosome-recycling factor (186 aa).

A disordered region spans residues 140 to 163; it reads LKKAEKDGDIGQDEGRSLSERVQK.

The protein belongs to the RRF family.

The protein localises to the cytoplasm. Its function is as follows. Responsible for the release of ribosomes from messenger RNA at the termination of protein biosynthesis. May increase the efficiency of translation by recycling ribosomes from one round of translation to another. The polypeptide is Ribosome-recycling factor (Rhizobium rhizogenes (strain K84 / ATCC BAA-868) (Agrobacterium radiobacter)).